We begin with the raw amino-acid sequence, 833 residues long: MKVHIHTKFCLICLLTFIFHHCNHCHEDHDHGPEELHRHHRGMTESESSKFSVQDAENEKKYYIEKLFDRYGENGRLSFFGLEKLLTNLGLGEIKVVEINHEDLGHDHVSHLDILAVQEGKHFHSHTHQHFHNHLNAENHTTTSVTSKRNHKCDPEKEAAELPIKADDKHLHDRNHRFHHRHRLHHHLDHNTTRHVHNDSVAHSEHGEPGHSPSPETNKTQEQSEVKSVKVRRKEKGKRKKENSEVNTPGFLPNHDHSEQYEHNRVHKLDRVHSPGHPHAHLPEHSGHELGHGHQELDPDNEGELRHTRKREAPHVRKSAIYSTPSHKDQSEDDRQHECLNVTQLLKHFGLGPNSPISPDLFTYLCPALLYQIDSRLCIEHFDKLLVEDLNKDKTLVPEDKTNIGASAWICGIISITVISLLSLLGVILVPIINQGCFKFLLTFLVALAVGTMSGDALLHLLPHSQGGHDHSHQHTHGHGHSHGHESKEFLEEYDAVLKGLVALGGIYLLFIIEHCIRMFKHYKQQRGKQKWFMKQSTEESTIGRKLSDHKLNSTPDADWLQLKPLAGTDDSVVSEDRLNETELTDLEAQQESPPKNYLGVEEEKIMDHSHSDGLHTIHEHEVHVTSHNHHDEDKAVLRKHSHQWHHRHAHHSHGPCHSGSDLKETGIANIAWMVIMGDGIHNFSDGLAIGAAFSAGLTGGISTSIAVFCHELPHELGDFAVLLKAGMTVKQAIVYNLLSAMMAYIGMLIGTAVGQYANNITLWIFAITAGMFLYVALVDMLPEMLHGDGDHEEHGFCPVGQFILQNLGLLFGFAIMLVIALYEDKIVFDIQF.

The N-terminal stretch at 1-25 (MKVHIHTKFCLICLLTFIFHHCNHC) is a signal peptide. Residues 30-48 (DHGPEELHRHHRGMTESES) show a composition bias toward basic and acidic residues. 2 disordered regions span residues 30-54 (DHGP…FSVQ) and 137-167 (AENH…IKAD). Positions 137-147 (AENHTTTSVTS) are enriched in polar residues. The span at 152–167 (KCDPEKEAAELPIKAD) shows a compositional bias: basic and acidic residues. N-linked (GlcNAc...) asparagine glycans are attached at residues Asn-191 and Asn-198. Basic and acidic residues predominate over residues 200–209 (SVAHSEHGEP). Disordered stretches follow at residues 200-257 (SVAH…NHDH) and 271-335 (RVHS…EDDR). Asn-218 carries N-linked (GlcNAc...) asparagine glycosylation. Over residues 229–241 (VKVRRKEKGKRKK) the composition is skewed to basic residues. Basic and acidic residues-rich tracts occupy residues 281-315 (HLPE…EAPH) and 326-335 (SHKDQSEDDR). Asn-341 carries N-linked (GlcNAc...) asparagine glycosylation. 2 helical membrane-spanning segments follow: residues 413–433 (IISI…VPII) and 440–460 (FLLT…ALLH). The disordered stretch occupies residues 466-485 (QGGHDHSHQHTHGHGHSHGH). A helical membrane pass occupies residues 497 to 517 (VLKGLVALGGIYLLFIIEHCI). Phosphothreonine is present on residues Thr-538 and Thr-555. Phosphoserine is present on Ser-593. 4 helical membrane-spanning segments follow: residues 689–709 (AIGA…IAVF), 734–754 (IVYN…GTAV), 761–781 (ITLW…LVDM), and 803–823 (FILQ…IALY).

This sequence belongs to the ZIP transporter (TC 2.A.5) family. As to quaternary structure, interacts with SLC39A6. This interaction triggers cells to undergo EMT and mitosis. Found in a complex with SLC39A6, SLC39A10 and with the 'Ser-727' phosphorylated form of STAT3 throughout mitosis. Found in a complex with SLC39A6, SLC39A10 and with NCAM1; this complex controls NCAM1 phosphorylation and integration into focal adhesion complexes during epithelial-tomesenchymal transition. Found in a complex with SLC39A6, SLC39A10 and with GSK3B that controls NCAM1 phosphorylation. In terms of processing, undergoes N-terminal ectodomain shedding. Expressed in the liver, kidney and brain.

It is found in the cell membrane. It localises to the apical cell membrane. The enzyme catalyses Zn(2+)(in) = Zn(2+)(out). Its function is as follows. Zinc-influx transporter. When associated with SLC39A6, the heterodimer formed by SLC39A10 and SLC39A6 mediates cellular zinc uptake to trigger cells to undergo epithelial-to-mesenchymal transition (EMT). mediates cellular zinc uptake to trigger cells to undergo epithelial-to-mesenchymal transition (EMT). SLC39A10-SLC39A6 heterodimers play also an essentiel role in initiating mitosis by importing zinc into cells to initiate a pathway resulting in the onset of mitosis. Plays an important for both mature B-cell maintenance and humoral immune responses. When associated with SLC39A10, the heterodimer controls NCAM1 phosphorylation and integration into focal adhesion complexes during EMT. The sequence is that of Zinc transporter ZIP10 from Mus musculus (Mouse).